The chain runs to 197 residues: Dephospho-CoA kinase (197 aa).

Positions 2–197 (IIGITGGIAS…SALLSLANPR (196 aa)) constitute a DPCK domain. ATP is bound at residue 10–15 (ASGKST).

Belongs to the CoaE family.

The protein localises to the cytoplasm. It catalyses the reaction 3'-dephospho-CoA + ATP = ADP + CoA + H(+). It functions in the pathway cofactor biosynthesis; coenzyme A biosynthesis; CoA from (R)-pantothenate: step 5/5. Functionally, catalyzes the phosphorylation of the 3'-hydroxyl group of dephosphocoenzyme A to form coenzyme A. This chain is Dephospho-CoA kinase, found in Streptococcus pyogenes serotype M3 (strain ATCC BAA-595 / MGAS315).